The following is a 150-amino-acid chain: 3-hydroxyacyl-[acyl-carrier-protein] dehydratase FabZ (150 aa).

Residue histidine 56 is part of the active site.

It belongs to the thioester dehydratase family. FabZ subfamily.

The protein localises to the cytoplasm. The enzyme catalyses a (3R)-hydroxyacyl-[ACP] = a (2E)-enoyl-[ACP] + H2O. Its function is as follows. Involved in unsaturated fatty acids biosynthesis. Catalyzes the dehydration of short chain beta-hydroxyacyl-ACPs and long chain saturated and unsaturated beta-hydroxyacyl-ACPs. This Desulfotalea psychrophila (strain LSv54 / DSM 12343) protein is 3-hydroxyacyl-[acyl-carrier-protein] dehydratase FabZ.